The chain runs to 219 residues: Thymidylate kinase (219 aa).

7 to 14 provides a ligand contact to ATP; it reads GIDGAGKS.

This sequence belongs to the thymidylate kinase family.

The catalysed reaction is dTMP + ATP = dTDP + ADP. Its function is as follows. Phosphorylation of dTMP to form dTDP in both de novo and salvage pathways of dTTP synthesis. This is Thymidylate kinase from Chlorobium phaeobacteroides (strain DSM 266 / SMG 266 / 2430).